The chain runs to 130 residues: Small ribosomal subunit protein eS6 (130 aa).

This sequence belongs to the eukaryotic ribosomal protein eS6 family.

The protein is Small ribosomal subunit protein eS6 of Methanosphaera stadtmanae (strain ATCC 43021 / DSM 3091 / JCM 11832 / MCB-3).